The primary structure comprises 115 residues: Translation initiation factor 1A 2 (115 aa).

Positions methionine 1–lysine 34 are disordered. The segment covering aspartate 22–lysine 34 has biased composition (basic and acidic residues). Residues threonine 27–threonine 101 enclose the S1-like domain.

Belongs to the eIF-1A family.

In terms of biological role, seems to be required for maximal rate of protein biosynthesis. Enhances ribosome dissociation into subunits and stabilizes the binding of the initiator Met-tRNA(I) to 40 S ribosomal subunits. This chain is Translation initiation factor 1A 2, found in Methanosarcina barkeri (strain Fusaro / DSM 804).